The primary structure comprises 212 residues: 3-demethoxyubiquinol 3-hydroxylase (212 aa).

A disordered region spans residues 21–42 (SRMSRPLPVPQESAVTEAAPEL). Fe cation-binding residues include Glu61, Glu91, His94, Glu143, Glu175, and His178.

Belongs to the COQ7 family. Fe cation is required as a cofactor.

It localises to the cell membrane. It catalyses the reaction a 5-methoxy-2-methyl-3-(all-trans-polyprenyl)benzene-1,4-diol + AH2 + O2 = a 3-demethylubiquinol + A + H2O. The protein operates within cofactor biosynthesis; ubiquinone biosynthesis. Functionally, catalyzes the hydroxylation of 2-nonaprenyl-3-methyl-6-methoxy-1,4-benzoquinol during ubiquinone biosynthesis. The chain is 3-demethoxyubiquinol 3-hydroxylase from Paraburkholderia xenovorans (strain LB400).